A 353-amino-acid chain; its full sequence is Photosystem II protein D1 (353 aa).

N-acetylthreonine is present on threonine 2. Threonine 2 carries the post-translational modification Phosphothreonine. Transmembrane regions (helical) follow at residues 29–46 (YIGWFGVLMIPTLLTATS), 118–133 (HFLLGVACYMGREWEL), and 142–156 (WIAVAYSAPVAAATA). Histidine 118 contacts chlorophyll a. Tyrosine 126 is a pheophytin a binding site. [CaMn4O5] cluster-binding residues include aspartate 170 and glutamate 189. Residues 197-218 (FHMLGVAGVFGGSLFSAMHGSL) traverse the membrane as a helical segment. Position 198 (histidine 198) interacts with chlorophyll a. A quinone is bound by residues histidine 215 and 264-265 (SF). Histidine 215 provides a ligand contact to Fe cation. Histidine 272 contributes to the Fe cation binding site. Residues 274-288 (LLAAWPVVGIWFTAL) form a helical membrane-spanning segment. [CaMn4O5] cluster contacts are provided by histidine 332, glutamate 333, aspartate 342, and alanine 344. Positions 345–353 (AVEAPSTNG) are excised as a propeptide.

It belongs to the reaction center PufL/M/PsbA/D family. In terms of assembly, PSII is composed of 1 copy each of membrane proteins PsbA, PsbB, PsbC, PsbD, PsbE, PsbF, PsbH, PsbI, PsbJ, PsbK, PsbL, PsbM, PsbT, PsbX, PsbY, PsbZ, Psb30/Ycf12, at least 3 peripheral proteins of the oxygen-evolving complex and a large number of cofactors. It forms dimeric complexes. Requires The D1/D2 heterodimer binds P680, chlorophylls that are the primary electron donor of PSII, and subsequent electron acceptors. It shares a non-heme iron and each subunit binds pheophytin, quinone, additional chlorophylls, carotenoids and lipids. D1 provides most of the ligands for the Mn4-Ca-O5 cluster of the oxygen-evolving complex (OEC). There is also a Cl(-1) ion associated with D1 and D2, which is required for oxygen evolution. The PSII complex binds additional chlorophylls, carotenoids and specific lipids. as cofactor. Post-translationally, tyr-161 forms a radical intermediate that is referred to as redox-active TyrZ, YZ or Y-Z. In terms of processing, C-terminally processed by CTPA; processing is essential to allow assembly of the oxygen-evolving complex and thus photosynthetic growth.

It localises to the plastid. The protein localises to the chloroplast thylakoid membrane. The enzyme catalyses 2 a plastoquinone + 4 hnu + 2 H2O = 2 a plastoquinol + O2. Photosystem II (PSII) is a light-driven water:plastoquinone oxidoreductase that uses light energy to abstract electrons from H(2)O, generating O(2) and a proton gradient subsequently used for ATP formation. It consists of a core antenna complex that captures photons, and an electron transfer chain that converts photonic excitation into a charge separation. The D1/D2 (PsbA/PsbD) reaction center heterodimer binds P680, the primary electron donor of PSII as well as several subsequent electron acceptors. This is Photosystem II protein D1 from Dioscorea elephantipes (Elephant's foot yam).